Reading from the N-terminus, the 160-residue chain is MPSFDIVSEIDTVELRNAVDNSNRELSTRFDFRNVQASFELVEQTVKVSAEGDFQLKQMRDILRGHLAKRGVDANSMDAKTAEQTGKNWHQDIVFLQGIETPMAKKIVKLIKDAKLKVQASIQGDKVRVTGKKRDDLQETIAAIRAAELGQPFQFNNFRD.

The protein belongs to the YajQ family.

In terms of biological role, nucleotide-binding protein. This chain is Nucleotide-binding protein VV1_2655, found in Vibrio vulnificus (strain CMCP6).